Here is a 511-residue protein sequence, read N- to C-terminus: MQEKTLTESIDAALSSIGEASRTTQPEIELRENGVVTTVLNGIALIRGLPGVGYEELVEMSGGVYGIAFNVDPDEVGVVLLGEYAKLQAGGRARRTGRVMDVPVGDGLLGRVVNPLGRPLDAEGEPRFSGRLPIERPSPGIMDRNAVSTPLQTGLKVVDAIVPIGRGQRELILGDRQTGKTAIAVATILNQKGRNVICIYCAIGQRASAVAKVLAQLREHGAMAHTVAVVTEGNDPSGLQYIAPYAATSIGEYFMEQGRDVLIVYDDLTNHARAYRELSLLLKRPPGREAFPGDIFYVHSRLLERSTHLRKELGGGSLTALPIIETEAQNISAYIPTNLISITDGQIYLSPTLFELGNLPAVDIGKSVSRVGGKAQLAAYRSVTGRLKLAYAQFEELENFARFGTRLDEASRKAITHGERIRECLKQDELDVLGVEEQILILLSLSEGQFDPLELSEVSGAMKRLSAAARELPRDLLERLHSDRPLSDEDRRRLLQTAEAALQKKRTAGRL.

ATP is bound at residue Gly174–Thr181.

It belongs to the ATPase alpha/beta chains family. As to quaternary structure, F-type ATPases have 2 components, CF(1) - the catalytic core - and CF(0) - the membrane proton channel. CF(1) has five subunits: alpha(3), beta(3), gamma(1), delta(1), epsilon(1). CF(0) has four main subunits: a(1), b(1), b'(1) and c(9-12).

The protein localises to the cell inner membrane. The enzyme catalyses ATP + H2O + 4 H(+)(in) = ADP + phosphate + 5 H(+)(out). Functionally, produces ATP from ADP in the presence of a proton gradient across the membrane. The alpha chain is a regulatory subunit. The chain is ATP synthase subunit alpha 1 from Chlorobium luteolum (strain DSM 273 / BCRC 81028 / 2530) (Pelodictyon luteolum).